Here is a 212-residue protein sequence, read N- to C-terminus: Ribonuclease HII (212 aa).

The 206-residue stretch at 1-206 folds into the RNase H type-2 domain; the sequence is MICGVDEAGK…VKNLLHQKNQ (206 aa). 3 residues coordinate a divalent metal cation: Asp-6, Glu-7, and Asp-101.

Belongs to the RNase HII family. Requires Mn(2+) as cofactor. Mg(2+) serves as cofactor.

It localises to the cytoplasm. It carries out the reaction Endonucleolytic cleavage to 5'-phosphomonoester.. In terms of biological role, endonuclease that specifically degrades the RNA of RNA-DNA hybrids. The polypeptide is Ribonuclease HII (Methanospirillum hungatei JF-1 (strain ATCC 27890 / DSM 864 / NBRC 100397 / JF-1)).